A 282-amino-acid chain; its full sequence is 4-diphosphocytidyl-2-C-methyl-D-erythritol kinase (282 aa).

Lys11 is an active-site residue. Residue 93–103 (LVSAGLAGGSA) coordinates ATP. The active site involves Asp133.

It belongs to the GHMP kinase family. IspE subfamily.

The enzyme catalyses 4-CDP-2-C-methyl-D-erythritol + ATP = 4-CDP-2-C-methyl-D-erythritol 2-phosphate + ADP + H(+). It participates in isoprenoid biosynthesis; isopentenyl diphosphate biosynthesis via DXP pathway; isopentenyl diphosphate from 1-deoxy-D-xylulose 5-phosphate: step 3/6. Functionally, catalyzes the phosphorylation of the position 2 hydroxy group of 4-diphosphocytidyl-2C-methyl-D-erythritol. This chain is 4-diphosphocytidyl-2-C-methyl-D-erythritol kinase, found in Ehrlichia canis (strain Jake).